The sequence spans 394 residues: Deoxyguanosinetriphosphate triphosphohydrolase-like protein (394 aa).

The interval 1 to 34 (MSSSPFFVPRAPYAEDPAKSRGRRFPEDESRTRT) is disordered. A compositionally biased stretch (basic and acidic residues) spans 16–34 (DPAKSRGRRFPEDESRTRT). Positions 70–210 (RLTHSLEVAQ…AALADDIAYN (141 aa)) constitute an HD domain.

Belongs to the dGTPase family. Type 2 subfamily.

This Caulobacter sp. (strain K31) protein is Deoxyguanosinetriphosphate triphosphohydrolase-like protein.